The primary structure comprises 525 residues: Nucleolar and spindle-associated protein 1-A (525 aa).

Disordered stretches follow at residues 46-205 (ESKD…LHEA), 248-292 (EKTP…RFSA), 373-397 (TPES…PEKA), and 451-525 (SLSR…VPVQ). Residues 58–69 (SSLTDTDELNSS) are compositionally biased toward polar residues. Positions 82–92 (THRRGRGRKPL) are enriched in basic residues. Residues 106-127 (SVGTGTESLASETDNTQDQNCL) show a composition bias toward polar residues. Residues 160–169 (TTEKRQKKAS) are compositionally biased toward basic and acidic residues. Residues 270–285 (PPTTGASPSRTPTNQR) show a composition bias toward polar residues. A compositionally biased stretch (polar residues) spans 476-494 (CGSNNNVSVLKNNFKQPHL). Over residues 495–514 (QTREDRRKQHEQDRKGKRDQ) the composition is skewed to basic and acidic residues.

This sequence belongs to the NUSAP family. As to quaternary structure, interacts with DNA. Interacts with microtubules, ipo7, kpna2 and kpnb1. Microtubule stabilization is inhibited by ipo7 and kpna2, while microtubule bundling is inhibited by kpnb1. Active GTP-bound ran causes dissociation of ipo7 and kpnb1.

It is found in the cytoplasm. The protein resides in the nucleus. Its subcellular location is the cytoskeleton. The protein localises to the spindle. Microtubule-associated protein with the capacity to bundle and stabilize microtubules. May associate with chromosomes and promote the organization of meiotic or mitotic spindle microtubules around them. This is Nucleolar and spindle-associated protein 1-A (nusap1-a) from Xenopus laevis (African clawed frog).